The following is an 846-amino-acid chain: Spindle pole body component SPC98 (846 aa).

Phosphoserine occurs at positions 124 and 136.

The protein belongs to the TUBGCP family. As to quaternary structure, interacts with TUB4, SPC72 and SPC97.

It localises to the nucleus. The protein resides in the cytoplasm. The protein localises to the cytoskeleton. Its subcellular location is the microtubule organizing center. It is found in the spindle pole body. Its function is as follows. Involved in microtubule organization by the microtubule organizing center, the spindle pole body (SPB). Probably part of the microtubule attachment site at the SPB. This chain is Spindle pole body component SPC98 (SPC98), found in Saccharomyces cerevisiae (strain ATCC 204508 / S288c) (Baker's yeast).